Here is a 200-residue protein sequence, read N- to C-terminus: Translation machinery-associated protein 22 (200 aa).

Residues 95–166 (VVIRREARTK…EVEAYIHSLL (72 aa)) form the SUI1 domain.

It belongs to the DENR family. Interacts with the 40S ribosomal subunit.

It localises to the cytoplasm. This chain is Translation machinery-associated protein 22 (TMA22), found in Kluyveromyces lactis (strain ATCC 8585 / CBS 2359 / DSM 70799 / NBRC 1267 / NRRL Y-1140 / WM37) (Yeast).